We begin with the raw amino-acid sequence, 343 residues long: UDP-3-O-acylglucosamine N-acyltransferase (343 aa).

Residue His-237 is the Proton acceptor of the active site.

It belongs to the transferase hexapeptide repeat family. LpxD subfamily. Homotrimer.

It catalyses the reaction a UDP-3-O-[(3R)-3-hydroxyacyl]-alpha-D-glucosamine + a (3R)-hydroxyacyl-[ACP] = a UDP-2-N,3-O-bis[(3R)-3-hydroxyacyl]-alpha-D-glucosamine + holo-[ACP] + H(+). Its pathway is bacterial outer membrane biogenesis; LPS lipid A biosynthesis. Catalyzes the N-acylation of UDP-3-O-acylglucosamine using 3-hydroxyacyl-ACP as the acyl donor. Is involved in the biosynthesis of lipid A, a phosphorylated glycolipid that anchors the lipopolysaccharide to the outer membrane of the cell. The protein is UDP-3-O-acylglucosamine N-acyltransferase of Synechococcus sp. (strain JA-3-3Ab) (Cyanobacteria bacterium Yellowstone A-Prime).